The following is a 186-amino-acid chain: Threonylcarbamoyl-AMP synthase (186 aa).

The YrdC-like domain maps to 5 to 186 (LLTIKAAAKL…WEAQTQKRLR (182 aa)).

This sequence belongs to the SUA5 family. TsaC subfamily.

Its subcellular location is the cytoplasm. The catalysed reaction is L-threonine + hydrogencarbonate + ATP = L-threonylcarbamoyladenylate + diphosphate + H2O. Its function is as follows. Required for the formation of a threonylcarbamoyl group on adenosine at position 37 (t(6)A37) in tRNAs that read codons beginning with adenine. Catalyzes the conversion of L-threonine, HCO(3)(-)/CO(2) and ATP to give threonylcarbamoyl-AMP (TC-AMP) as the acyladenylate intermediate, with the release of diphosphate. In Hydrogenovibrio crunogenus (strain DSM 25203 / XCL-2) (Thiomicrospira crunogena), this protein is Threonylcarbamoyl-AMP synthase.